We begin with the raw amino-acid sequence, 353 residues long: Sphingosine 1-phosphate receptor 2 (353 aa).

Over 1 to 34 the chain is Extracellular; sequence MGSLYSEYLNPNKVQEHYNYTKETLETQETTSRQ. N-linked (GlcNAc...) asparagine glycosylation occurs at Asn19. A helical membrane pass occupies residues 35 to 59; sequence VASAFIVILCCAIVVENLLVLIAVA. Topologically, residues 60–66 are cytoplasmic; sequence RNSKFHS. A helical membrane pass occupies residues 67-95; the sequence is AMYLFLGNLAASDLLAGVAFVANTLLSGS. Residues 96–109 are Extracellular-facing; it reads VTLRLTPVQWFARE. A helical transmembrane segment spans residues 110–128; sequence GSAFITLSASVFSLLAIAI. Over 129–147 the chain is Cytoplasmic; the sequence is ERHVAIAKVKLYGSDKSCR. Residues 148 to 173 form a helical membrane-spanning segment; it reads MLLLIGASWLISLVLGGLPILGWNCL. Residues 174–189 are Extracellular-facing; the sequence is GHLEACSTVLPLYAKH. A helical transmembrane segment spans residues 190 to 210; the sequence is YVLCVVTIFSIILLAIVALYV. Over 211-233 the chain is Cytoplasmic; it reads RIYCVVRSSHADMAAPQTLALLK. Residues 234 to 255 traverse the membrane as a helical segment; it reads TVTIVLGVFIVCWLPAFSILLL. Over 256–271 the chain is Extracellular; the sequence is DYACPVHSCPILYKAH. A helical transmembrane segment spans residues 272–292; it reads YFFAVSTLNSLLNPVIYTWRS. Residues 293–353 lie on the Cytoplasmic side of the membrane; that stretch reads RDLRREVLRP…PTFLEGNTVV (61 aa). A lipid anchor (S-palmitoyl cysteine) is attached at Cys305.

Belongs to the G-protein coupled receptor 1 family.

It is found in the cell membrane. In terms of biological role, receptor for the lysosphingolipid sphingosine 1-phosphate (S1P). S1P is a bioactive lysophospholipid that elicits diverse physiological effects on most types of cells and tissues. When expressed in rat HTC4 hepatoma cells, is capable of mediating S1P-induced cell proliferation and suppression of apoptosis. Receptor for the chemokine-like protein FAM19A5. Mediates the inhibitory effect of FAM19A5 on vascular smooth muscle cell proliferation and migration. In lymphoid follicles, couples the binding of S1P to the activation of GNA13 and downstream inhibition of AKT activation leading to suppression of germinal center (GC) B cell growth and migration outside the GC niche. This Homo sapiens (Human) protein is Sphingosine 1-phosphate receptor 2 (S1PR2).